A 459-amino-acid polypeptide reads, in one-letter code: Interleukin-7 receptor subunit alpha (459 aa).

The signal sequence occupies residues 1–20 (MTILGTTFGVFFSLLQVVSG). Residues 21 to 241 (ESGYAQNGDL…NNHSGETNPT (221 aa)) lie on the Extracellular side of the membrane. The cysteines at positions 42 and 57 are disulfide-linked. Residues Asn-49 and Asn-65 are each glycosylated (N-linked (GlcNAc...) asparagine). Disulfide bonds link Cys-74/Cys-82 and Cys-108/Cys-118. Residues 131-231 (APFDLSVIYR…PSYYFRTPEI (101 aa)) enclose the Fibronectin type-III domain. Asn-182 carries N-linked (GlcNAc...) asparagine glycosylation. The WSXWS motif motif lies at 217–221 (WSEWS). Residues 242–262 (LLTISILSVLSVVLLVILACV) form a helical membrane-spanning segment. Residues 263–459 (LWKKRIKPII…VTMSSFCQKR (197 aa)) are Cytoplasmic-facing. The Box 1 motif motif lies at 272 to 280 (IWPSLPDHK). Residue Thr-282 is modified to Phosphothreonine; by PKC. Residues 327–357 (TVPPQLEESETQRPGGDVQSPSWPSENVVTT) are disordered. A compositionally biased stretch (polar residues) spans 345 to 357 (QSPSWPSENVVTT).

This sequence belongs to the type I cytokine receptor family. Type 4 subfamily. The IL7 receptor is a heterodimer of IL7R and IL2RG. The TSLP receptor is a heterodimer of CRLF2 and IL7R. Interacts with CD53. In terms of processing, N-glycosylated IL-7Ralpha binds IL7 300-fold more tightly than the unglycosylated form. Post-translationally, ubiquitinated by MARCHF8; leading to lysosomal degradation.

The protein resides in the cell membrane. Receptor for interleukin-7. Also acts as a receptor for thymic stromal lymphopoietin (TSLP). This Callithrix jacchus (White-tufted-ear marmoset) protein is Interleukin-7 receptor subunit alpha (IL7R).